Reading from the N-terminus, the 456-residue chain is Gamma-aminobutyric acid receptor subunit alpha-1 (456 aa).

A signal peptide spans 1-27; it reads MRKSPGLSDYLWAWILLLSTLTGRSYG. The Extracellular segment spans residues 28–253; sequence QPSLQDELKD…FHLKRKIGYF (226 aa). N-linked (GlcNAc...) asparagine glycosylation is present at asparagine 38. Arginine 94 lines the 4-aminobutanoate pocket. The N-linked (GlcNAc...) asparagine glycan is linked to asparagine 138. Threonine 157 lines the 4-aminobutanoate pocket. The cysteines at positions 166 and 180 are disulfide-linked. A helical transmembrane segment spans residues 254-274; the sequence is VIQTYLPCIMTVILSQVSFWL. The Cytoplasmic segment spans residues 275-279; the sequence is NRESV. Residues 280–301 traverse the membrane as a helical segment; the sequence is PARTVFGVTTVLTMTTLSISAR. Residues 302–311 are Extracellular-facing; that stretch reads NSLPKVAYAT. A helical transmembrane segment spans residues 312–333; that stretch reads AMDWFIAVCYAFVFSALIEFAT. Topologically, residues 334-421 are cytoplasmic; it reads VNYFTKRGYA…TFNSVSKIDR (88 aa). A helical membrane pass occupies residues 422-441; it reads LSRIAFPLLFGIFNLVYWAT. Residues 442 to 456 lie on the Extracellular side of the membrane; it reads YLNREPQLKAPTPHQ.

The protein belongs to the ligand-gated ion channel (TC 1.A.9) family. Gamma-aminobutyric acid receptor (TC 1.A.9.5) subfamily. GABRA1 sub-subfamily. In terms of assembly, heteropentamer, formed by a combination of alpha (GABRA1-6), beta (GABRB1-3), gamma (GABRG1-3), delta (GABRD), epsilon (GABRE), rho (GABRR1-3), pi (GABRP) and theta (GABRQ) subunits, each subunit exhibiting distinct physiological and pharmacological properties. Interacts with UBQLN1. Interacts with TRAK1. Interacts with KIF21B. Identified in a complex of 720 kDa composed of LHFPL4, NLGN2, GABRA1, GABRB2, GABRG2 and GABRB3. Interacts with LHFPL4. Interacts with NLGN2. Interacts with SHISA7; interaction leads to the regulation of GABA(A) receptor trafficking, channel deactivation kinetics and pharmacology.

The protein resides in the postsynaptic cell membrane. The protein localises to the cell membrane. Its subcellular location is the cytoplasmic vesicle membrane. The catalysed reaction is chloride(in) = chloride(out). Allosterically activated by benzodiazepines, the neuroanesthetic alphaxalone and pentobarbital. Inhibited by the antagonist bicuculline. Potentiated by histamine. In terms of biological role, alpha subunit of the heteropentameric ligand-gated chloride channel gated by gamma-aminobutyric acid (GABA), a major inhibitory neurotransmitter in the brain. GABA-gated chloride channels, also named GABA(A) receptors (GABAAR), consist of five subunits arranged around a central pore and contain GABA active binding site(s) located at the alpha and beta subunit interface(s). When activated by GABA, GABAARs selectively allow the flow of chloride anions across the cell membrane down their electrochemical gradient. Alpha-1/GABRA1-containing GABAARs are largely synaptic. Chloride influx into the postsynaptic neuron following GABAAR opening decreases the neuron ability to generate a new action potential, thereby reducing nerve transmission. GABAARs containing alpha-1 and beta-2 or -3 subunits exhibit synaptogenic activity; the gamma-2 subunit being necessary but not sufficient to induce rapid synaptic contacts formation. GABAARs function also as histamine receptor where histamine binds at the interface of two neighboring beta subunits and potentiates GABA response. GABAARs containing alpha, beta and epsilon subunits also permit spontaneous chloride channel activity while preserving the structural information required for GABA-gated openings. Alpha-1-mediated plasticity in the orbitofrontal cortex regulates context-dependent action selection. Together with rho subunits, may also control neuronal and glial GABAergic transmission in the cerebellum. This chain is Gamma-aminobutyric acid receptor subunit alpha-1 (GABRA1), found in Macaca fascicularis (Crab-eating macaque).